Here is a 245-residue protein sequence, read N- to C-terminus: DNA polymerase sliding clamp 1 (245 aa).

The protein belongs to the PCNA family. The subunits circularize to form a toroid; DNA passes through its center. Replication factor C (RFC) is required to load the toroid on the DNA. Forms a dimeric complex with PCNA3 and a trimeric complex with PCNA2 and PCNA3; does not form homotrimers.

Sliding clamp subunit that acts as a moving platform for DNA processing. Responsible for tethering the catalytic subunit of DNA polymerase and other proteins to DNA during high-speed replication. The trimeric complex inhibits DNA ligase and both 3'-5' and 5'-3' activity of Hel308 (Hjm) helicase, but stimulates Hjc, the Holliday junction cleavage enzyme. The polypeptide is DNA polymerase sliding clamp 1 (Sulfurisphaera tokodaii (strain DSM 16993 / JCM 10545 / NBRC 100140 / 7) (Sulfolobus tokodaii)).